We begin with the raw amino-acid sequence, 315 residues long: Transmembrane protein 231 (315 aa).

The chain crosses the membrane as a helical span at residues 23–43 (AALFLLLTTALTYIPPLLVAF). Residues asparagine 194, asparagine 199, and asparagine 221 are each glycosylated (N-linked (GlcNAc...) asparagine). A helical membrane pass occupies residues 262–282 (FWEMIKFAWIQYVSILLIFLW).

It belongs to the TMEM231 family. Part of the tectonic-like complex (also named B9 complex). Interacts with TMEM107.

Its subcellular location is the cell projection. It is found in the cilium membrane. Its function is as follows. Transmembrane component of the tectonic-like complex, a complex localized at the transition zone of primary cilia and acting as a barrier that prevents diffusion of transmembrane proteins between the cilia and plasma membranes. Required for ciliogenesis and sonic hedgehog/SHH signaling. This is Transmembrane protein 231 (Tmem231) from Mus musculus (Mouse).